Here is a 226-residue protein sequence, read N- to C-terminus: Uracil-DNA glycosylase (226 aa).

The active-site Proton acceptor is the aspartate 68.

The protein belongs to the uracil-DNA glycosylase (UDG) superfamily. UNG family.

The protein resides in the cytoplasm. It carries out the reaction Hydrolyzes single-stranded DNA or mismatched double-stranded DNA and polynucleotides, releasing free uracil.. In terms of biological role, excises uracil residues from the DNA which can arise as a result of misincorporation of dUMP residues by DNA polymerase or due to deamination of cytosine. The polypeptide is Uracil-DNA glycosylase (Mycobacteroides abscessus (strain ATCC 19977 / DSM 44196 / CCUG 20993 / CIP 104536 / JCM 13569 / NCTC 13031 / TMC 1543 / L948) (Mycobacterium abscessus)).